The primary structure comprises 91 residues: Elongation factor 1-beta (91 aa).

The protein belongs to the EF-1-beta/EF-1-delta family.

Its function is as follows. Promotes the exchange of GDP for GTP in EF-1-alpha/GDP, thus allowing the regeneration of EF-1-alpha/GTP that could then be used to form the ternary complex EF-1-alpha/GTP/AAtRNA. The polypeptide is Elongation factor 1-beta (Thermococcus kodakarensis (strain ATCC BAA-918 / JCM 12380 / KOD1) (Pyrococcus kodakaraensis (strain KOD1))).